Here is a 125-residue protein sequence, read N- to C-terminus: MLWQGESIRKVTGGRRRPAQGKRRFEIGLAPADTHIGEDRSKLVRTTGGNTKIRSMRAQFANVTNLANGETKKVKIENVEENGANPNYVRRNLLTKGAIIRTEIGRARIMSRPGQDGIINAVLLA.

Residues 1 to 20 are disordered; the sequence is MLWQGESIRKVTGGRRRPAQ.

It belongs to the eukaryotic ribosomal protein eS8 family. As to quaternary structure, part of the 30S ribosomal subunit.

This chain is Small ribosomal subunit protein eS8, found in Methanoregula boonei (strain DSM 21154 / JCM 14090 / 6A8).